Consider the following 473-residue polypeptide: Anthocyanidin-3-O-glucoside rhamnosyltransferase (473 aa).

The protein belongs to the UDP-glycosyltransferase family. As to expression, expressed in petals, styles and anthers.

It functions in the pathway pigment biosynthesis; anthocyanin biosynthesis. Controls the rhamnosylation of reddish anthocyanidin-3-O-glucosides, which is the first step in a series of modifications that finally yield magenta or blue/purple coloured anthocyanins. Controls the conversion of anthocyanidin-3-O-glucosides to anthocyanidin-3-O-rutinosides. This is Anthocyanidin-3-O-glucoside rhamnosyltransferase from Petunia hybrida (Petunia).